The chain runs to 99 residues: Monothiol glutaredoxin-S11 (99 aa).

The region spanning 1–99 (MDKVMRMSSE…LVPLVKPYLC (99 aa)) is the Glutaredoxin domain. C21 serves as a coordination point for [2Fe-2S] cluster.

It belongs to the glutaredoxin family. CC-type subfamily.

The protein localises to the cytoplasm. Functionally, may only reduce GSH-thiol disulfides, but not protein disulfides. The chain is Monothiol glutaredoxin-S11 (GRXS11) from Arabidopsis thaliana (Mouse-ear cress).